The chain runs to 579 residues: ATP-dependent lipid A-core flippase (579 aa).

Helical transmembrane passes span 24 to 44, 63 to 83, 150 to 170, 251 to 271, and 275 to 295; these read FALS…LPAL, WVPL…FIST, VLGL…IVFA, VIQF…AGQA, and TTTV…FAPL. The 283-residue stretch at 25–307 folds into the ABC transmembrane type-1 domain; that stretch reads ALSIVGLILT…LTAVNDQLQR (283 aa). Residues 339–575 form the ABC transporter domain; the sequence is LAFRDVGLTY…QGRYAQLHAL (237 aa). Residue 373 to 380 participates in ATP binding; sequence GASGSGKT.

It belongs to the ABC transporter superfamily. Lipid exporter (TC 3.A.1.106) family. In terms of assembly, homodimer.

It is found in the cell inner membrane. The catalysed reaction is ATP + H2O + lipid A-core oligosaccharideSide 1 = ADP + phosphate + lipid A-core oligosaccharideSide 2.. Functionally, involved in lipopolysaccharide (LPS) biosynthesis. Translocates lipid A-core from the inner to the outer leaflet of the inner membrane. Transmembrane domains (TMD) form a pore in the inner membrane and the ATP-binding domain (NBD) is responsible for energy generation. The chain is ATP-dependent lipid A-core flippase from Thiobacillus denitrificans (strain ATCC 25259 / T1).